The sequence spans 317 residues: UV DNA damage endonuclease (317 aa).

This sequence belongs to the uve1/UvsE family.

Component in a DNA repair pathway. Removal of UV LIGHT damaged nucleotides. Recognizes pyrimidine dimers and cleave a phosphodiester bond immediately 5' to the lesion. This Bacillus anthracis (strain A0248) protein is UV DNA damage endonuclease.